The sequence spans 196 residues: Pyridoxal 5'-phosphate synthase subunit PdxT (196 aa).

Residue 47-49 (GES) coordinates L-glutamine. The active-site Nucleophile is Cys-79. Residues Arg-106 and 134–135 (IR) contribute to the L-glutamine site. Residues His-170 and Glu-172 each act as charge relay system in the active site.

It belongs to the glutaminase PdxT/SNO family. In terms of assembly, in the presence of PdxS, forms a dodecamer of heterodimers. Only shows activity in the heterodimer.

The enzyme catalyses aldehydo-D-ribose 5-phosphate + D-glyceraldehyde 3-phosphate + L-glutamine = pyridoxal 5'-phosphate + L-glutamate + phosphate + 3 H2O + H(+). It catalyses the reaction L-glutamine + H2O = L-glutamate + NH4(+). It participates in cofactor biosynthesis; pyridoxal 5'-phosphate biosynthesis. In terms of biological role, catalyzes the hydrolysis of glutamine to glutamate and ammonia as part of the biosynthesis of pyridoxal 5'-phosphate. The resulting ammonia molecule is channeled to the active site of PdxS. This Bacillus thuringiensis subsp. konkukian (strain 97-27) protein is Pyridoxal 5'-phosphate synthase subunit PdxT.